Here is a 384-residue protein sequence, read N- to C-terminus: Zinc transporter 7 (384 aa).

Residues 1–25 (MERFVQFLRRGNGLMAASLAAGSCA) form the signal peptide. The Extracellular segment spans residues 26–46 (EEVAKAEGAGCRDDAAALRLK). Residues 47–67 (GVAMATILVAGVVGVGLPLAG) traverse the membrane as a helical segment. The Cytoplasmic segment spans residues 68–79 (RKRRALRTDSAA). The chain crosses the membrane as a helical span at residues 80–100 (FVAAKAFAAGVILATGFVHML). At 101–119 (HDAEHALSSPCLPAHPWRS) the chain is on the extracellular side. A helical transmembrane segment spans residues 120–140 (FPFPGFVAMSAALATLVLDFL). Residues 141 to 227 (ATRFYEGKHR…GEGEVPAQVR (87 aa)) lie on the Cytoplasmic side of the membrane. A disordered region spans residues 185-222 (DNKAPLLQPHSHSHSHPHGHGHGHELAQPEGSGGEGEV). The segment covering 195-205 (SHSHSHPHGHG) has biased composition (basic residues). Residues 228–248 (SVVVSQILEMGIVSHSVIIGL) form a helical membrane-spanning segment. At 249 to 261 (SLGVSRSPCTIRP) the chain is on the extracellular side. The helical transmembrane segment at 262 to 282 (LVAALSFHQFFEGFALGGCIA) threads the bilayer. Topologically, residues 283-291 (QAQFKTLSA) are cytoplasmic. The chain crosses the membrane as a helical span at residues 292-312 (AIMACFFAITTPAGIAAGAGV). Topologically, residues 313 to 323 (ASFYNANSPRA) are extracellular. The helical transmembrane segment at 324–344 (LVVEGILDSVSAGILIYMSLV) threads the bilayer. Residues 345–363 (DLIAADFLGGKMTGSTRQQ) are Cytoplasmic-facing. A helical membrane pass occupies residues 364–384 (VMAYIALFLGALSMSSLAIWA).

The protein belongs to the ZIP transporter (TC 2.A.5) family.

The protein resides in the cell membrane. Functionally, zinc transporter that may be involved in zinc uptake from the rhizosphere. The sequence is that of Zinc transporter 7 (ZIP7) from Oryza sativa subsp. japonica (Rice).